The primary structure comprises 260 residues: Coiled-coil domain-containing protein 172 (260 aa).

Positions 13-194 form a coiled coil; it reads SEHQAEESRR…FEDKKHEAIC (182 aa).

Belongs to the CCDC172 family. As to quaternary structure, may interact with TEKT2.

The protein resides in the cytoplasm. The protein localises to the cell projection. It localises to the cilium. The polypeptide is Coiled-coil domain-containing protein 172 (CCDC172) (Bos taurus (Bovine)).